A 48-amino-acid polypeptide reads, in one-letter code: uncharacterized protein (48 aa).

Belongs to the ELIP/psbS family.

The protein resides in the plastid. The protein localises to the chloroplast. Functionally, possible role in chlorophyll and/or carotenoid binding. This is an uncharacterized protein from Pyropia yezoensis (Susabi-nori).